A 2845-amino-acid polypeptide reads, in one-letter code: Adenomatous polyposis coli protein (2845 aa).

Alanine 2 is modified (N-acetylalanine). Residues 2–61 (AAASYDQLLKQVEALKMENSNLRQELEDNSNHLTKLETEASNMKEVLKQLQGSIEDETMT) are a coiled coil. Phosphoserine occurs at positions 105 and 109. Residues 125–245 (SRESTGYLEE…QAAEAERSSQ (121 aa)) adopt a coiled-coil conformation. The disordered stretch occupies residues 238 to 304 (AEAERSSQSR…THSAPRRLTS (67 aa)). Residues 239–263 (EAERSSQSRHDAASHEAGRQHEGHG) are compositionally biased toward basic and acidic residues. Positions 266 to 279 (ESNTAASSSGQSPA) are enriched in polar residues. ARM repeat units follow at residues 451–493 (LMKL…HYSV), 503–545 (LTNL…IASV), 546–589 (LRNL…VLSA), 590–636 (LWNL…GGGI), 637–681 (LRNV…ACGT), 682–723 (LWNL…SAAA), and 724–765 (LRNL…LDAQ). Phosphoserine occurs at positions 742, 746, and 778. The interval 828–873 (VLPSSSSSRGSLDSSRSEKDRSLERERGIGLSAYHPTTENAGTSSK) is disordered. Residues 831 to 841 (SSSSSRGSLDS) show a composition bias toward low complexity. The segment covering 842–855 (SRSEKDRSLERERG) has biased composition (basic and acidic residues). The span at 862–873 (HPTTENAGTSSK) shows a compositional bias: polar residues. A Phosphoserine modification is found at serine 906. Disordered regions lie at residues 921 to 942 (RRSS…ENSN) and 956 to 986 (RSSN…SYSE). Over residues 927 to 942 (HTHSNTYNFTKSENSN) the composition is skewed to polar residues. Over residues 959 to 969 (NDSLNSVTSSD) the composition is skewed to low complexity. A phosphoserine mark is found at serine 985, serine 1036, and serine 1040. The interval 1018-1168 (ELDTPINYSL…TNYSIKYNEE (151 aa)) is interaction with catenins. Disordered regions lie at residues 1058 to 1079 (IKQN…YSEN), 1092 to 1168 (GQQE…YNEE), 1189 to 1247 (SQKP…GTTC), and 1307 to 1375 (ENDV…PEHY). Composition is skewed to polar residues over residues 1066–1078 (ARSQ…VYSE) and 1103–1128 (RGTS…QSLC). Residues 1189-1204 (SQKPSFSFSKNSSAQS) show a composition bias toward low complexity. Over residues 1211-1245 (SPSSENTAVPPSNAKRQNQLRPSSAQRNGQTQKGT) the composition is skewed to polar residues. Low complexity predominate over residues 1354–1365 (SSGAKSPSKSGA). 5 positions are modified to phosphoserine: serine 1359, serine 1370, serine 1384, serine 1391, and serine 1394. 5 disordered regions span residues 1400-1474 (IASS…VNAA), 1525-1568 (PPVQ…SDDD), 1587-1606 (RKAK…VARK), 1746-2010 (DQVQ…APKS), and 2042-2069 (ISSA…KVGG). Threonine 1437 is modified (phosphothreonine). Residues 1447–1465 (AKREVPKSKVPAAEKRESG) are compositionally biased toward basic and acidic residues. Positions 1532–1546 (NGNETESEQPEESNE) are enriched in acidic residues. A compositionally biased stretch (basic and acidic residues) spans 1547–1562 (NQDKEVEKPDSEKDLL). Serine 1565 carries the post-translational modification Phosphoserine. The span at 1747-1762 (QVQQASSTSSGANKNQ) shows a compositional bias: polar residues. Residue serine 1772 is modified to Phosphoserine. The span at 1783–1792 (YRTRVRKNTD) shows a compositional bias: basic and acidic residues. 3 positions are modified to phosphoserine: serine 1859, serine 1861, and serine 1862. The interval 1864-1891 (DFDDDDVDLSREKAELRKGKESKDSEAK) is highly charged. The segment covering 1871 to 1894 (DLSREKAELRKGKESKDSEAKVTC) has biased composition (basic and acidic residues). Over residues 1900 to 1911 (SSQQAASKSQAS) the composition is skewed to low complexity. The segment covering 1927–1936 (KQPTFPQSSK) has biased composition (polar residues). Residues 1937–1949 (DGPDRGAATDEKL) show a composition bias toward basic and acidic residues. Phosphoserine is present on residues serine 1969 and serine 1971. Over residues 1979–1990 (NNKESEPIKEAE) the composition is skewed to basic and acidic residues. An interaction with AXIN1 region spans residues 2034 to 2058 (EDDLLQECISSAMPKKKRPSRLKSE). Serine 2087, serine 2092, serine 2125, serine 2129, serine 2130, and serine 2132 each carry phosphoserine. Disordered regions lie at residues 2146–2190 (SPFH…GIKG), 2202–2652 (KIRS…PPVS), and 2664–2845 (CPIN…VTSV). The residue at position 2151 (threonine 2151) is a Phosphothreonine. Residues 2167–2674 (ILKPGEKSTL…PINNPRSGRS (508 aa)) form a basic region region. The span at 2169–2187 (KPGEKSTLEAKKIESENKG) shows a compositional bias: basic and acidic residues. Polar residues-rich tracts occupy residues 2203–2223 (IRSN…NMPS) and 2257–2272 (ASKS…TSPR). Phosphoserine is present on residues serine 2260, serine 2270, and serine 2283. Low complexity predominate over residues 2290–2311 (SQISGSNKGSSRSGSRDSTPSR). Residues 2312-2331 (PTQQPLSRPMQSPGRNSISP) show a composition bias toward polar residues. Positions 2348 to 2369 (TSSPSTASTKSSGSGKMSYTSP) are enriched in low complexity. The span at 2370–2411 (GRQLSQQNLTKQASLSKNASSIPRSESASKGLNQMSNGNGSN) shows a compositional bias: polar residues. Low complexity-rich tracts occupy residues 2417-2429 (SRMS…GSES) and 2459-2477 (SASF…PTRS). A phosphoserine mark is found at serine 2473 and serine 2535. Residues 2475–2845 (TRSQAQTPVL…HSGSYLVTSV (371 aa)) form an interaction with DLG1 region. Basic and acidic residues predominate over residues 2518-2535 (NDGRPTKRHDIARSHSES). Over residues 2555 to 2568 (SSSLPRVSTWRRTG) the composition is skewed to polar residues. A Phosphoserine modification is found at serine 2569. Positions 2569 to 2579 (SSSSILSASSE) are enriched in low complexity. A compositionally biased stretch (basic and acidic residues) spans 2580–2592 (SSEKAKSEDERHV). Positions 2626–2638 (ASQSASSGAASGA) are enriched in low complexity. Residues 2668–2679 (NPRSGRSPTGNT) show a composition bias toward polar residues. Serine 2671 and serine 2674 each carry phosphoserine. The interaction with MAPRE1 stretch occupies residues 2674 to 2845 (SPTGNTPPVI…HSGSYLVTSV (172 aa)). At threonine 2679 the chain carries Phosphothreonine. The span at 2684–2694 (DSVSEKGSSSI) shows a compositional bias: low complexity. Positions 2695–2705 (KDSKDSKDTHG) are enriched in basic and acidic residues. A compositionally biased stretch (polar residues) spans 2706–2716 (KQSVGSGSPVQ). Phosphoserine occurs at positions 2713 and 2726. The segment covering 2765–2776 (SSSSSSKHSSPS) has biased composition (low complexity). The segment covering 2786–2814 (FNYNPSPRKSSADSTSARPSQIPTPVSTN) has biased composition (polar residues). Serine 2791 is subject to Phosphoserine. The short motif at 2805-2808 (SQIP) is the Microtubule tip localization signal element. A PDZ-binding motif is present at residues 2843 to 2845 (TSV).

This sequence belongs to the adenomatous polyposis coli (APC) family. Forms homooligomers. Found in a complex consisting of ARHGEF4, APC and CTNNB1. Found in a complex composed of MACF1, APC, AXIN1, CTNNB1 and GSK3B. The complex composed, at least, of APC, CTNNB1 and GSK3B interacts with JPT1; the interaction requires the inactive form of GSK3B (phosphorylated at 'Ser-9'). Interacts with APC2. Interacts with DLG1 (via PDZ domains) and DLG3 (via PDZ domains). Interacts with alpha- and beta-catenins. Interacts with AXIN1 (via RGS domain). Interacts with ARHGEF4 (via N-terminus). Interacts (via C-terminal residues 2674-2843) with MAPRE1 (via C-terminal residues 206-211); the interaction inhibits association with and bundling of F-actin. Interacts with MAPRE2 and MAPRE3 (via C-terminus). Interacts with DIAPH1; DIAPH1 acts as a scaffold protein for MAPRE1 and APC to stabilize microtubules and promote cell migration. Interacts with DIAPH2. Interacts with SCRIB; may mediate targeting to adherens junctions of epithelial cells. Interacts with SPATA13 (via N-terminus and SH3 domain). Interacts with ASAP1 (via SH3 domain). Interacts (at the cell membrane) with AMER1 and AMER2 (via ARM repeats). Interacts with KHDRBS1. Interacts with actin; binds both to F-actin and actin filament bundles. Post-translationally, phosphorylated; phosphorylation enhances the F-actin bundling activity. Phosphorylated by GSK3B. Ubiquitinated, leading to its degradation by the proteasome. Ubiquitination is facilitated by Axin. Deubiquitinated by ZRANB1/TRABID. In terms of tissue distribution, expressed in liver, spleen, kidney, heart, lung, brain, stomach, intestine, testis and ovary.

It localises to the cell junction. It is found in the adherens junction. The protein localises to the cytoplasm. Its subcellular location is the cytoskeleton. The protein resides in the cell projection. It localises to the lamellipodium. It is found in the ruffle membrane. The protein localises to the cell membrane. In terms of biological role, tumor suppressor. Promotes rapid degradation of CTNNB1 and participates in Wnt signaling as a negative regulator. APC activity is correlated with its phosphorylation state. Activates the GEF activity of SPATA13 and ARHGEF4. Plays a role in hepatocyte growth factor (HGF)-induced cell migration. Required for MMP9 up-regulation via the JNK signaling pathway in colorectal tumor cells. Associates with both microtubules and actin filaments, components of the cytoskeleton. Plays a role in mediating the organization of F-actin into ordered bundles. Functions downstream of Rho GTPases and DIAPH1 to selectively stabilize microtubules. Acts as a mediator of ERBB2-dependent stabilization of microtubules at the cell cortex. It is required for the localization of MACF1 to the cell membrane and this localization of MACF1 is critical for its function in microtubule stabilization. The polypeptide is Adenomatous polyposis coli protein (Apc) (Mus musculus (Mouse)).